The chain runs to 360 residues: uncharacterized protein (360 aa).

6 consecutive transmembrane segments (helical) span residues Ile-12–Ile-32, Val-52–Val-72, Ile-96–Ile-116, Ile-278–Tyr-298, Phe-306–Leu-326, and Phe-336–Val-356.

Its subcellular location is the cell membrane. This is an uncharacterized protein from Rickettsia prowazekii (strain Madrid E).